Reading from the N-terminus, the 530-residue chain is Ubiquitin carboxyl-terminal hydrolase 17 (530 aa).

In terms of domain architecture, USP spans 80–375 (AGLQNMGNTC…QAYVLFYIQK (296 aa)). Residue Cys89 is the Nucleophile of the active site. His334 (proton acceptor) is an active-site residue. 2 stretches are compositionally biased toward basic and acidic residues: residues 382–392 (SESVSRGREPR) and 398–413 (DTDR…RDHP). Disordered regions lie at residues 382-416 (SESV…PCLQ) and 490-530 (SSTT…LVCQ). Residues 399–530 (TDRRATQGEL…HSKRALLVCQ (132 aa)) are mediates interaction with SUDS3. Over residues 498–510 (ESVNTGTLASLQG) the composition is skewed to polar residues. A compositionally biased stretch (basic residues) spans 511–524 (RTRRSKGKNKHSKR).

It belongs to the peptidase C19 family. USP17 subfamily. Interacts with SUDS3; the interaction is direct. Broadly expressed.

Its subcellular location is the nucleus. It is found in the endoplasmic reticulum. The enzyme catalyses Thiol-dependent hydrolysis of ester, thioester, amide, peptide and isopeptide bonds formed by the C-terminal Gly of ubiquitin (a 76-residue protein attached to proteins as an intracellular targeting signal).. In terms of biological role, deubiquitinating enzyme that removes conjugated ubiquitin from specific proteins to regulate different cellular processes. Regulates cell proliferation by deubiquitinating and inhibiting RCE1 thereby controlling the small GTPases NRAS and HRAS localization and activation. In parallel, mediates deubiquitination of CDC25A, preventing CDC25A degradation by the proteasome during the G1/S and G2/M phases promoting cell-cycle progression. Also regulates cell proliferation and apoptosis through deubiquitination of SUDS3 a regulator of histone deacetylation. Through activation of the Rho family GTPases RAC1A, CDC42 and RHOA, regulates cell migration. Through the cleavage of 'Lys-48'- and 'Lys-63'-linked polyubiquitin chains of the cytoplasmic innate immune receptors RIGI and IFIH1 stimulates the cellular response to viral infection. This chain is Ubiquitin carboxyl-terminal hydrolase 17 (USP17L2), found in Homo sapiens (Human).